Consider the following 220-residue polypeptide: Peptidyl-tRNA hydrolase (220 aa).

TRNA is bound at residue Tyr14. Catalysis depends on His19, which acts as the Proton acceptor. Residues Phe60, Asn62, and Asn106 each coordinate tRNA.

This sequence belongs to the PTH family. In terms of assembly, monomer.

It is found in the cytoplasm. It carries out the reaction an N-acyl-L-alpha-aminoacyl-tRNA + H2O = an N-acyl-L-amino acid + a tRNA + H(+). Hydrolyzes ribosome-free peptidyl-tRNAs (with 1 or more amino acids incorporated), which drop off the ribosome during protein synthesis, or as a result of ribosome stalling. In terms of biological role, catalyzes the release of premature peptidyl moieties from peptidyl-tRNA molecules trapped in stalled 50S ribosomal subunits, and thus maintains levels of free tRNAs and 50S ribosomes. In Campylobacter hominis (strain ATCC BAA-381 / DSM 21671 / CCUG 45161 / LMG 19568 / NCTC 13146 / CH001A), this protein is Peptidyl-tRNA hydrolase.